The sequence spans 411 residues: Thyroid hormone receptor beta (411 aa).

Residues 1–24 (MTPNSMTENGLPAWDKPKPCPDGE) are disordered. Residues 1 to 104 (MTPNSMTENG…IPSYLDKDEL (104 aa)) are modulating. Residues 15 to 24 (DKPKPCPDGE) are compositionally biased toward basic and acidic residues. Zn(2+) contacts are provided by Cys-105, Cys-108, Cys-122, Cys-125, Cys-143, Cys-149, Cys-159, and Cys-162. 2 consecutive NR C4-type zinc fingers follow at residues 105–125 (CVVC…CEGC) and 143–167 (CKYE…FKKC). The nuclear receptor DNA-binding region spans 105-179 (CVVCGDKATG…VGMATDLVLD (75 aa)). The NR LBD domain occupies 215–411 (QEWELIKTVT…EHYINYRRNS (197 aa)). Residues 242–411 (KFLPEDIGQA…EHYINYRRNS (170 aa)) are interaction with NR2F6. The 3,3',5-triiodo-L-thyronine site is built by Arg-280 and Asn-329. Arg-280 and Asn-329 together coordinate L-thyroxine.

It belongs to the nuclear hormone receptor family. NR1 subfamily. In terms of assembly, binds DNA as a dimer; homodimer and heterodimer with RXRA. Interacts with the coactivators NCOA1/SRC1, NCOA2/GRIP1, NCOA7 and MED1/TRAP220 in a ligand-inducible manner. Interacts with the corepressor NCOR1 in absence of ligand. Interacts with C1D. Interacts with NR2F6; the interaction impairs the binding of the THRB homodimer and THRB:RXRB heterodimer to T3 response elements. Interacts with PRMT2 and THRSP. Interacts with TACC1; this interaction is decreased in the presence of thyroid hormone T3.

The protein localises to the nucleus. In terms of biological role, nuclear hormone receptor that can act as a repressor or activator of transcription. High affinity receptor for thyroid hormones, including triiodothyronine and thyroxine. In Ovis aries (Sheep), this protein is Thyroid hormone receptor beta (THRB).